We begin with the raw amino-acid sequence, 1141 residues long: Tetratricopeptide repeat protein 17 (1141 aa).

The TPR 1 repeat unit spans residues 295 to 328; the sequence is FTSYYTLGNIYAMLGEYNHSVLCYDHALQARPGF. Residues 340–382 are a coiled coil; that stretch reads CQQKLEQKLEAQHRSLQRTLNELKEYQKQHDHYLRQQEILEKH. TPR repeat units follow at residues 619-652, 689-722, 1014-1048, 1051-1084, and 1085-1118; these read WLILNEAGLYWRAVGNSTFAIACLQRALNLAPLQ, PLTFLSLGNAYLALKNISGALEAFRQALKLTTKC, SWVLSSMAALYWRVKGQGKKAIDCLRQALHYAPHQ, DVPLISLANILHNAKLWNDAVIVATMAVEIAPHF, and AVNHFTLGNVYVAMEEFEKALVWYESTLKLQPEF.

The protein belongs to the TTC17 family. In terms of assembly, interacts with CATIP. As to expression, expressed in germ cells as well as in somatic cells of the testis (at protein level).

It localises to the cytoplasm. It is found in the cell membrane. The protein localises to the cytoskeleton. In terms of biological role, plays a role in primary ciliogenesis by modulating actin polymerization. The polypeptide is Tetratricopeptide repeat protein 17 (TTC17) (Homo sapiens (Human)).